The primary structure comprises 197 residues: Recombination protein RecR (197 aa).

The segment at C56 to C71 adopts a C4-type zinc-finger fold. One can recognise a Toprim domain in the interval Q79–P173.

This sequence belongs to the RecR family.

Its function is as follows. May play a role in DNA repair. It seems to be involved in an RecBC-independent recombinational process of DNA repair. It may act with RecF and RecO. The chain is Recombination protein RecR from Rippkaea orientalis (strain PCC 8801 / RF-1) (Cyanothece sp. (strain PCC 8801)).